Reading from the N-terminus, the 394-residue chain is uncharacterized protein (394 aa).

12 helical membrane-spanning segments follow: residues 13-35 (AIIGIFMIFSLRVFGMFMIVPVL), 50-72 (VGVAIGIYGIFQIIFQIPYGWLS), 79-97 (LIINIGLLCFLLGNIIAWS), 107-129 (GRGLQGSGAISSVCMTLLSELVL), 136-158 (IMGLLGVSFGISFFLAVILSPII), 168-190 (FLINSLLSIFCLFFGMFYIPASL), 218-240 (INLSVFLIHFFLMCNFIIIPVEL), 250-272 (VPEIIYIVILLVSFLIVLFCICF), 277-299 (VLYSNITITTSAFLFVLCYGIFL), 309-331 (ILGLQIFFIAFIFLETILPALVN), 344-366 (AIYSTSQFLGSSMGGIIGGILFS), and 371-393 (FEVLFFEFVVSILWFITSILYLI).

It belongs to the major facilitator superfamily.

The protein localises to the cell membrane. This is an uncharacterized protein from Buchnera aphidicola subsp. Baizongia pistaciae (strain Bp).